Reading from the N-terminus, the 73-residue chain is UPF0154 protein LJ_1506 (73 aa).

Residues 3 to 23 (LGLAIFLIIIALLIGLVGGFY) traverse the membrane as a helical segment.

This sequence belongs to the UPF0154 family.

The protein localises to the cell membrane. In Lactobacillus johnsonii (strain CNCM I-12250 / La1 / NCC 533), this protein is UPF0154 protein LJ_1506.